The chain runs to 363 residues: Ribosome-binding ATPase YchF (363 aa).

One can recognise an OBG-type G domain in the interval phenylalanine 3–leucine 256. An ATP-binding site is contributed by asparagine 12–threonine 17. Mg(2+) is bound by residues serine 16 and threonine 36. One can recognise a TGS domain in the interval asparagine 278–phenylalanine 361.

Requires Mg(2+) as cofactor.

Its function is as follows. ATPase that binds to both the 70S ribosome and the 50S ribosomal subunit in a nucleotide-independent manner. Does not hydrolyze GTP. This Haemophilus influenzae (strain ATCC 51907 / DSM 11121 / KW20 / Rd) protein is Ribosome-binding ATPase YchF.